The chain runs to 318 residues: D-alanine--D-alanine ligase B (318 aa).

The 199-residue stretch at 117 to 315 folds into the ATP-grasp domain; it reads KQVWLSLGLS…FEALVWRVLE (199 aa). 146 to 201 lines the ATP pocket; the sequence is AEQIGLPVIVKPANEGSSVGVSRVFDQAQLDEAVTLAARYDGALLMEQLIEGDELT. Positions 268, 282, and 284 each coordinate Mg(2+).

The protein belongs to the D-alanine--D-alanine ligase family. Mg(2+) is required as a cofactor. The cofactor is Mn(2+).

Its subcellular location is the cytoplasm. The enzyme catalyses 2 D-alanine + ATP = D-alanyl-D-alanine + ADP + phosphate + H(+). It participates in cell wall biogenesis; peptidoglycan biosynthesis. Functionally, cell wall formation. The sequence is that of D-alanine--D-alanine ligase B from Xanthomonas campestris pv. campestris (strain ATCC 33913 / DSM 3586 / NCPPB 528 / LMG 568 / P 25).